The primary structure comprises 429 residues: 46 kDa membrane protein (429 aa).

The next 9 membrane-spanning stretches (helical) occupy residues 26–46, 51–71, 99–119, 173–193, 224–244, 279–299, 315–335, 360–380, and 407–427; these read AALT…EDVF, TGID…VSVL, LVLV…VLLI, FLIH…ALLP, LLIK…AHPV, TLLF…TDVV, LLTV…IDNI, ILWW…AVGA, and IAVT…RYLV.

The protein belongs to the CitM (TC 2.A.11) transporter family.

It localises to the cell membrane. The chain is 46 kDa membrane protein (ag45) from Mycobacterium leprae (strain TN).